Consider the following 355-residue polypeptide: Serine acetyltransferase 4 (355 aa).

Belongs to the transferase hexapeptide repeat family. In terms of assembly, homomultimer. As to expression, localized in vascular tissues, particularly in phloem.

It is found in the cytoplasm. It catalyses the reaction L-serine + acetyl-CoA = O-acetyl-L-serine + CoA. It participates in amino-acid biosynthesis; L-cysteine biosynthesis; L-cysteine from L-serine: step 1/2. Feedback inhibitions by L-Ser and acetyl-CoA. The sequence is that of Serine acetyltransferase 4 from Arabidopsis thaliana (Mouse-ear cress).